Here is a 1126-residue protein sequence, read N- to C-terminus: DNA-directed RNA polymerase subunit Rpo2 (1126 aa).

Zn(2+) contacts are provided by cysteine 1060, cysteine 1063, cysteine 1078, and histidine 1081.

This sequence belongs to the RNA polymerase beta chain family. Part of the 13-subunit RNA polymerase complex. Interacts with TFS4. As to quaternary structure, (Microbial infection) Binds viral protein RIP which blocks global transcription. Zn(2+) is required as a cofactor.

It localises to the cytoplasm. It carries out the reaction RNA(n) + a ribonucleoside 5'-triphosphate = RNA(n+1) + diphosphate. Its function is as follows. DNA-dependent RNA polymerase (RNAP) catalyzes the transcription of DNA into RNA using the four ribonucleoside triphosphates as substrates. This subunit is involved in DNA promoter recognition. In Sulfolobus acidocaldarius (strain ATCC 33909 / DSM 639 / JCM 8929 / NBRC 15157 / NCIMB 11770), this protein is DNA-directed RNA polymerase subunit Rpo2.